Here is a 132-residue protein sequence, read N- to C-terminus: Translation initiation factor 5A (132 aa).

A Hypusine modification is found at Lys-37.

The protein belongs to the eIF-5A family.

It localises to the cytoplasm. Its function is as follows. Functions by promoting the formation of the first peptide bond. In Methanocaldococcus jannaschii (strain ATCC 43067 / DSM 2661 / JAL-1 / JCM 10045 / NBRC 100440) (Methanococcus jannaschii), this protein is Translation initiation factor 5A (eif5a).